An 89-amino-acid chain; its full sequence is Phosphocarrier protein HPr (89 aa).

In terms of domain architecture, HPr spans 2–89 (AKFSAIITDK…TMIDTALIQG (88 aa)). His-15 (pros-phosphohistidine intermediate) is an active-site residue. Ser-46 bears the Phosphoserine; by HPrK/P mark.

Belongs to the HPr family.

It is found in the cytoplasm. Phosphorylation on Ser-46 inhibits the phosphoryl transfer from enzyme I to HPr. General (non sugar-specific) component of the phosphoenolpyruvate-dependent sugar phosphotransferase system (sugar PTS). This major carbohydrate active-transport system catalyzes the phosphorylation of incoming sugar substrates concomitantly with their translocation across the cell membrane. The phosphoryl group from phosphoenolpyruvate (PEP) is transferred to the phosphoryl carrier protein HPr by enzyme I. Phospho-HPr then transfers it to the PTS EIIA domain. Its function is as follows. P-Ser-HPr interacts with the catabolite control protein A (CcpA), forming a complex that binds to DNA at the catabolite response elements cre, operator sites preceding a large number of catabolite-regulated genes. Thus, P-Ser-HPr is a corepressor in carbon catabolite repression (CCR), a mechanism that allows bacteria to coordinate and optimize the utilization of available carbon sources. P-Ser-HPr also plays a role in inducer exclusion, in which it probably interacts with several non-PTS permeases and inhibits their transport activity. This chain is Phosphocarrier protein HPr (ptsH), found in Mycoplasma capricolum subsp. capricolum (strain California kid / ATCC 27343 / NCTC 10154).